The primary structure comprises 305 residues: Olfactory receptor 9G9 (305 aa).

The Extracellular segment spans residues 1–27 (MQRSNHTVTEFILLGFTTDPGMQLGLF). Asn5 is a glycosylation site (N-linked (GlcNAc...) asparagine). A helical membrane pass occupies residues 28–48 (VVFLGVYSLTVVGNSTLIVLI). Over 49–64 (CNDSHLHTPMYFVVGN) the chain is Cytoplasmic. Residues 65–85 (LSFLDLWYSSVYTPKILVICI) form a helical membrane-spanning segment. The Extracellular portion of the chain corresponds to 86 to 96 (SEDKSISFAGC). A disulfide bond links Cys96 and Cys178. The helical transmembrane segment at 97-117 (LCQFFFSAGLAYSECCLLAAM) threads the bilayer. Topologically, residues 118-138 (AYDRYVAISKPLLYAQAMSIK) are cytoplasmic. A helical membrane pass occupies residues 139-159 (LCALLVAVSYCGGFINSSIIT). At 160-200 (KKTFSFNFCCENIIDDFFCDLLPLVKLACGEKGCYKFLMYF) the chain is on the extracellular side. Residues 201–221 (LLASNVICPAVLILASYLFII) traverse the membrane as a helical segment. The Cytoplasmic portion of the chain corresponds to 222-239 (TSVLRISSSQGRLKAFST). Residues 240–260 (CSSHLTSVTLYYGSILYIYAL) form a helical membrane-spanning segment. Residues 261–271 (PRSSYSFDMDK) are Extracellular-facing. Residues 272-291 (IVSTFYTEVLPMLNPMIYSL) traverse the membrane as a helical segment. The Cytoplasmic portion of the chain corresponds to 292-305 (RNKDVKEALKKLLP).

The protein belongs to the G-protein coupled receptor 1 family.

The protein resides in the cell membrane. Odorant receptor. In Homo sapiens (Human), this protein is Olfactory receptor 9G9 (OR9G9).